The following is a 416-amino-acid chain: Formyl-CoA:oxalate CoA-transferase (416 aa).

CoA is bound by residues 17-18 (QS), arginine 38, 72-75 (LNTK), 96-98 (NFH), histidine 104, and 137-140 (KAYE). Aspartate 169 serves as the catalytic Nucleophile. Residue 248-250 (GGQ) participates in substrate binding. 273–275 (QEQ) contacts CoA.

The protein belongs to the CoA-transferase III family. Frc subfamily. In terms of assembly, homodimer.

The enzyme catalyses formyl-CoA + oxalate = oxalyl-CoA + formate. It functions in the pathway metabolic intermediate degradation; oxalate degradation; CO(2) and formate from oxalate: step 1/2. Functionally, involved in the catabolism of oxalate and in the adapatation to low pH via the induction of the oxalate-dependent acid tolerance response (ATR). Catalyzes the transfer of the CoA moiety from formyl-CoA to oxalate. This chain is Formyl-CoA:oxalate CoA-transferase, found in Escherichia coli O81 (strain ED1a).